The sequence spans 278 residues: Small ribosomal subunit biogenesis GTPase RsgA (278 aa).

Residues 62–218 (KNTLVRPKVV…ICDTPGFNVI (157 aa)) form the CP-type G domain. GTP contacts are provided by residues 112 to 115 (TKND) and 162 to 170 (GQSGVGKSS). Residues C241, C246, H248, and C254 each coordinate Zn(2+).

Belongs to the TRAFAC class YlqF/YawG GTPase family. RsgA subfamily. In terms of assembly, monomer. Associates with 30S ribosomal subunit, binds 16S rRNA. It depends on Zn(2+) as a cofactor.

The protein resides in the cytoplasm. One of several proteins that assist in the late maturation steps of the functional core of the 30S ribosomal subunit. Helps release RbfA from mature subunits. May play a role in the assembly of ribosomal proteins into the subunit. Circularly permuted GTPase that catalyzes slow GTP hydrolysis, GTPase activity is stimulated by the 30S ribosomal subunit. This Mycoplasma pneumoniae (strain ATCC 29342 / M129 / Subtype 1) (Mycoplasmoides pneumoniae) protein is Small ribosomal subunit biogenesis GTPase RsgA.